The chain runs to 715 residues: Elongation factor G (715 aa).

Residues 8–290 (NRYRNIGICA…AVIDFLPAPT (283 aa)) form the tr-type G domain. GTP is bound by residues 17-24 (AHVDAGKT), 88-92 (DTPGH), and 142-145 (NKMD).

The protein belongs to the TRAFAC class translation factor GTPase superfamily. Classic translation factor GTPase family. EF-G/EF-2 subfamily.

The protein resides in the cytoplasm. Its function is as follows. Catalyzes the GTP-dependent ribosomal translocation step during translation elongation. During this step, the ribosome changes from the pre-translocational (PRE) to the post-translocational (POST) state as the newly formed A-site-bound peptidyl-tRNA and P-site-bound deacylated tRNA move to the P and E sites, respectively. Catalyzes the coordinated movement of the two tRNA molecules, the mRNA and conformational changes in the ribosome. This is Elongation factor G from Ectopseudomonas mendocina (strain ymp) (Pseudomonas mendocina).